The chain runs to 725 residues: DNA replication licensing factor MCM7 (725 aa).

The MCM domain maps to 333-538; the sequence is IYNKLARSLA…METDLEMARH (206 aa). 383-390 provides a ligand contact to ATP; sequence GDPGVAKS. An Arginine finger motif is present at residues 515–518; the sequence is SRFD.

It belongs to the MCM family. As to quaternary structure, component of the minichromosome maintenance (MCM) complex, a heterotetramer composed of MCM2, MCM3, MCM4, MCM5, MCM6 and MCM7.

It is found in the nucleus. The enzyme catalyses ATP + H2O = ADP + phosphate + H(+). In terms of biological role, probable component of the MCM2-7 complex (MCM complex) that may function as a DNA helicase and which is essential to undergo a single round of replication initiation and elongation per cell cycle in eukaryotic cells. This chain is DNA replication licensing factor MCM7 (MCM7), found in Oryza sativa subsp. indica (Rice).